The primary structure comprises 158 residues: N-acetylgalactosamine-specific phosphotransferase enzyme IIB component 1 (158 aa).

In terms of domain architecture, PTS EIIB type-4 spans 1–158; that stretch reads MTSPNILLTR…PGDQKEQIPD (158 aa). The active-site Pros-phosphohistidine intermediate is the His-17.

Its subcellular location is the cytoplasm. In terms of biological role, the phosphoenolpyruvate-dependent sugar phosphotransferase system (sugar PTS), a major carbohydrate active -transport system, catalyzes the phosphorylation of incoming sugar substrates concomitantly with their translocation across the cell membrane. This system is involved in N-acetylgalactosamine transport. The sequence is that of N-acetylgalactosamine-specific phosphotransferase enzyme IIB component 1 (agaB) from Escherichia coli (strain K12).